A 791-amino-acid polypeptide reads, in one-letter code: Nuclear cap-binding protein subunit 1-A (791 aa).

The tract at residues 1–24 (MSRRRHSDENDGGQAHKRRKTSEP) is disordered. The 213-residue stretch at 28 to 240 (EDRLESLICR…CLWAQIQKLK (213 aa)) folds into the MIF4G domain. Positions 641–714 (LHSTIRKMNK…SEQKNLFLVI (74 aa)) form a coiled coil. Positions 664–687 (QRLAKQHKHRDSDDNDEDSGRKDG) are disordered.

This sequence belongs to the NCBP1 family. In terms of assembly, component of the nuclear cap-binding complex (CBC), a heterodimer composed of ncbp1/cbp80 and ncbp2/cbp20 that interacts with m7GpppG-capped RNA. Component of an alternative nuclear cap-binding complex (CBC) composed of ncbp1/cbp80 and ncbp3.

Its subcellular location is the nucleus. It is found in the cytoplasm. In terms of biological role, component of the cap-binding complex (CBC), which binds cotranscriptionally to the 5'-cap of pre-mRNAs and is involved in various processes such as pre-mRNA splicing, translation regulation, nonsense-mediated mRNA decay, RNA-mediated gene silencing (RNAi) by microRNAs (miRNAs) and mRNA export. The CBC complex is involved in mRNA export from the nucleus, leading to the recruitment of the mRNA export machinery to the 5'-end of mRNA and to mRNA export in a 5' to 3' direction through the nuclear pore. The CBC complex is also involved in mediating U snRNA and intronless mRNAs export from the nucleus. The CBC complex is essential for a pioneer round of mRNA translation, before steady state translation when the CBC complex is replaced by cytoplasmic cap-binding protein eIF4E. The pioneer round of mRNA translation mediated by the CBC complex plays a central role in nonsense-mediated mRNA decay (NMD), NMD only taking place in mRNAs bound to the CBC complex, but not on eIF4E-bound mRNAs. The CBC complex enhances NMD in mRNAs containing at least one exon-junction complex (EJC), promoting the interaction between UPF1 and UPF2. The CBC complex is also involved in 'failsafe' NMD, which is independent of the EJC complex, while it does not participate in Staufen-mediated mRNA decay (SMD). During cell proliferation, the CBC complex is also involved in microRNAs (miRNAs) biogenesis via its interaction with SRRT/ARS2 and is required for miRNA-mediated RNA interference. The CBC complex also acts as a negative regulator of parn, thereby acting as an inhibitor of mRNA deadenylation. In the CBC complex, NCBP1/CBP80 does not bind directly capped RNAs (m7GpppG-capped RNA) but is required to stabilize the movement of the N-terminal loop of NCBP2/CBP20 and lock the CBC into a high affinity cap-binding state with the cap structure. Associates with NCBP3 to form an alternative cap-binding complex (CBC) which plays a key role in mRNA export. The conventional CBC with NCBP2 binds both small nuclear RNA (snRNA) and messenger (mRNA) and is involved in their export from the nucleus whereas the alternative CBC with NCBP3 does not bind snRNA and associates only with mRNA thereby playing a role only in mRNA export. This Xenopus laevis (African clawed frog) protein is Nuclear cap-binding protein subunit 1-A (ncbp1-a).